The sequence spans 398 residues: Acetate kinase (398 aa).

A Mg(2+)-binding site is contributed by Asn10. ATP is bound at residue Lys17. Arg91 contacts substrate. The active-site Proton donor/acceptor is Asp148. ATP is bound by residues 208-212 (HLGNG), 283-285 (DCR), and 331-335 (GIGEN). Residue Glu385 participates in Mg(2+) binding.

The protein belongs to the acetokinase family. As to quaternary structure, homodimer. The cofactor is Mg(2+). Requires Mn(2+) as cofactor.

Its subcellular location is the cytoplasm. The enzyme catalyses acetate + ATP = acetyl phosphate + ADP. The protein operates within metabolic intermediate biosynthesis; acetyl-CoA biosynthesis; acetyl-CoA from acetate: step 1/2. In terms of biological role, catalyzes the formation of acetyl phosphate from acetate and ATP. Can also catalyze the reverse reaction. The chain is Acetate kinase from Shewanella pealeana (strain ATCC 700345 / ANG-SQ1).